We begin with the raw amino-acid sequence, 21 residues long: Peptide PGLa-R5 (21 aa).

Leucine amide is present on Leu21.

As to expression, expressed by the skin glands.

The protein localises to the secreted. Functionally, antimicrobial peptide. This is Peptide PGLa-R5 from Xenopus ruwenzoriensis (Uganda clawed frog).